A 426-amino-acid polypeptide reads, in one-letter code: Lipase 7 (426 aa).

An N-terminal signal peptide occupies residues 1 to 15 (MFVFLALITLTTCLQ). N-linked (GlcNAc...) asparagine glycosylation is found at Asn74, Asn175, and Asn179. 2 disulfides stabilise this stretch: Cys108-Cys269 and Cys341-Cys385. Ser190 acts as the Charge relay system in catalysis. A glycan (N-linked (GlcNAc...) asparagine) is linked at Asn223. His358 acts as the Charge relay system in catalysis. N-linked (GlcNAc...) asparagine glycans are attached at residues Asn378, Asn379, Asn422, and Asn423.

This sequence belongs to the AB hydrolase superfamily. Lipase family. Class Lip subfamily.

The catalysed reaction is a triacylglycerol + H2O = a diacylglycerol + a fatty acid + H(+). In terms of biological role, secreted lipase that is able to hydrolze both the neutral triacylglycerols and the monopalmitate ester Tween 40, allowing the use of hydrolyzed products as carbon sources. Has broad lipolytic activity, which may be important for colonization and subsequent infection, therefore contributing to the persistence and virulence in human tissue. The polypeptide is Lipase 7 (Candida albicans (strain SC5314 / ATCC MYA-2876) (Yeast)).